Consider the following 325-residue polypeptide: L-lactate dehydrogenase (325 aa).

Residues Val19, Asp40, Lys45, Tyr70, and 84–85 (GA) contribute to the NAD(+) site. Residues Gln87 and Arg93 each contribute to the substrate site. NAD(+) is bound by residues Thr106, 123 to 125 (AAN), and Ser148. Position 125–128 (125–128 (NPVD)) interacts with substrate. 153-156 (DSAR) is a binding site for substrate. Positions 158 and 173 each coordinate beta-D-fructose 1,6-bisphosphate. The active-site Proton acceptor is the His180. Tyr225 is modified (phosphotyrosine). Thr234 contributes to the substrate binding site.

Belongs to the LDH/MDH superfamily. LDH family. In terms of assembly, homotetramer.

It localises to the cytoplasm. It carries out the reaction (S)-lactate + NAD(+) = pyruvate + NADH + H(+). It participates in fermentation; pyruvate fermentation to lactate; (S)-lactate from pyruvate: step 1/1. With respect to regulation, allosterically activated by fructose 1,6-bisphosphate (FBP). Functionally, catalyzes the conversion of lactate to pyruvate. The protein is L-lactate dehydrogenase of Latilactobacillus sakei subsp. sakei (strain 23K) (Lactobacillus sakei subsp. sakei).